Consider the following 743-residue polypeptide: Neutral ceramidase (743 aa).

Topologically, residues 1-14 (MASKSRRLSGLEIS) are cytoplasmic. Residues 15–35 (LIVLFLLMTAVSVALITVLAL) form a helical; Signal-anchor for type II membrane protein membrane-spanning segment. At 36 to 743 (KQESDKKEEV…FKVARSFYYF (708 aa)) the chain is on the lumenal side. The disordered stretch occupies residues 40–60 (DKKEEVTPEEPSPSVTPPEKP). Residues 49-59 (EPSPSVTPPEK) show a composition bias toward pro residues. Residues H151 and H260 each contribute to the Zn(2+) site. N265 carries an N-linked (GlcNAc...) asparagine glycan. S312 acts as the Nucleophile in catalysis. Intrachain disulfides connect C320-C334 and C327-C342. N331, N389, N398, and N451 each carry an N-linked (GlcNAc...) asparagine glycan. C406 and C456 form a disulfide bridge. Zn(2+) contacts are provided by E498 and Y538. Residue N661 is glycosylated (N-linked (GlcNAc...) asparagine). 3 residues coordinate Ca(2+): D672, S674, and T677. N720 carries N-linked (GlcNAc...) asparagine glycosylation.

This sequence belongs to the neutral ceramidase family. Zn(2+) serves as cofactor. Post-translationally, N-glycosylated. In terms of processing, O-glycosylated. As to expression, detected in intestine (at protein level).

The protein resides in the cell membrane. It is found in the membrane raft. Its subcellular location is the membrane. The protein localises to the caveola. It localises to the golgi apparatus membrane. The protein resides in the mitochondrion. It is found in the secreted. Its subcellular location is the extracellular exosome. The catalysed reaction is an N-acylsphing-4-enine + H2O = sphing-4-enine + a fatty acid. It catalyses the reaction N-dodecanoylsphing-4-enine + H2O = dodecanoate + sphing-4-enine. Its pathway is lipid metabolism; sphingolipid metabolism. Functionally, plasma membrane ceramidase that hydrolyzes sphingolipid ceramides into sphingosine and free fatty acids at neutral pH. Ceramides, sphingosine, and its phosphorylated form sphingosine-1-phosphate are bioactive lipids that mediate cellular signaling pathways regulating several biological processes including cell proliferation, apoptosis and differentiation. Also catalyzes the reverse reaction allowing the synthesis of ceramides from fatty acids and sphingosine. Together with sphingomyelinase, participates in the production of sphingosine and sphingosine-1-phosphate from the degradation of sphingomyelin, a sphingolipid enriched in the plasma membrane of cells. Also participates in the hydrolysis of ceramides from the extracellular milieu allowing the production of sphingosine-1-phosphate inside and outside cells. The chain is Neutral ceramidase (asah2) from Danio rerio (Zebrafish).